Reading from the N-terminus, the 424-residue chain is Serine/threonine-protein kinase H1 (424 aa).

Residue Gly2 is the site of N-myristoyl glycine attachment. Cys3 carries S-palmitoyl cysteine lipidation. The segment at 49-81 (KGGFPAASQGANPSPGTPRTSHTEPPSEPPRRA) is disordered. Positions 57 to 72 (QGANPSPGTPRTSHTE) are enriched in polar residues. A Protein kinase domain is found at 98 to 355 (YDIKALIGRG…ALQALRHPWV (258 aa)). Residues 104–112 (IGRGSFSRV) and Lys127 contribute to the ATP site. The active-site Proton acceptor is Asp218. The segment at 378–407 (RASSRCQSTKSAQSTRSSRSTRSNKSRRVR) is disordered. Ser380 and Ser381 each carry phosphoserine; by autocatalysis. Residues 385 to 398 (STKSAQSTRSSRST) are compositionally biased toward low complexity.

This sequence belongs to the protein kinase superfamily. CAMK Ser/Thr protein kinase family. As to quaternary structure, homodimer. Autophosphorylated on serine residues. Post-translationally, myristoylated. Required for membrane association. Prerequisite for palmitoylation to occur. In terms of processing, palmitoylated.

The protein localises to the golgi apparatus. The protein resides in the cytoplasm. It is found in the cytoskeleton. It localises to the microtubule organizing center. Its subcellular location is the centrosome. The protein localises to the nucleus speckle. The protein resides in the endoplasmic reticulum membrane. It is found in the cell membrane. It catalyses the reaction L-seryl-[protein] + ATP = O-phospho-L-seryl-[protein] + ADP + H(+). It carries out the reaction L-threonyl-[protein] + ATP = O-phospho-L-threonyl-[protein] + ADP + H(+). With respect to regulation, activity depends on Ca(2+) concentration. Its function is as follows. May be a SFC-associated serine kinase (splicing factor compartment-associated serine kinase) with a role in intranuclear SR protein (non-snRNP splicing factors containing a serine/arginine-rich domain) trafficking and pre-mRNA processing. This chain is Serine/threonine-protein kinase H1 (PSKH1), found in Bos taurus (Bovine).